Consider the following 95-residue polypeptide: Parvalbumin beta 3 (95 aa).

At Ala-1 the chain carries N-acetylalanine. EF-hand domains are found at residues 39–66 and 77–95; these read FFAI…FSAG and DVDG…LVKA. Asp-44, Asp-46, Ser-48, Phe-50, Glu-52, Glu-55, Asp-77, Asp-79, Asp-81, Met-83, and Glu-88 together coordinate Ca(2+).

The protein belongs to the parvalbumin family.

Functionally, in muscle, parvalbumin is thought to be involved in relaxation after contraction. It binds two calcium ions. The protein is Parvalbumin beta 3 of Merluccius paradoxus (Deep-water Cape hake).